Reading from the N-terminus, the 156-residue chain is Small ribosomal subunit protein uS7 (156 aa).

This sequence belongs to the universal ribosomal protein uS7 family. In terms of assembly, part of the 30S ribosomal subunit. Contacts proteins S9 and S11.

One of the primary rRNA binding proteins, it binds directly to 16S rRNA where it nucleates assembly of the head domain of the 30S subunit. Is located at the subunit interface close to the decoding center, probably blocks exit of the E-site tRNA. This Geotalea daltonii (strain DSM 22248 / JCM 15807 / FRC-32) (Geobacter daltonii) protein is Small ribosomal subunit protein uS7.